A 380-amino-acid chain; its full sequence is Cell division protein ZipA (380 aa).

The Periplasmic segment spans residues 1–7; that stretch reads MEDNFRN. A helical membrane pass occupies residues 8-28; the sequence is VLIILSAIVITAIFIHGLWTL. Residues 29–380 lie on the Cytoplasmic side of the membrane; it reads RKQKNPYKLK…DRKSRIALVE (352 aa).

Belongs to the ZipA family. Interacts with FtsZ via their C-terminal domains.

It is found in the cell inner membrane. In terms of biological role, essential cell division protein that stabilizes the FtsZ protofilaments by cross-linking them and that serves as a cytoplasmic membrane anchor for the Z ring. Also required for the recruitment to the septal ring of downstream cell division proteins. The polypeptide is Cell division protein ZipA (Colwellia psychrerythraea (strain 34H / ATCC BAA-681) (Vibrio psychroerythus)).